The sequence spans 177 residues: Large ribosomal subunit protein uL6 (177 aa).

Belongs to the universal ribosomal protein uL6 family. In terms of assembly, part of the 50S ribosomal subunit.

This protein binds to the 23S rRNA, and is important in its secondary structure. It is located near the subunit interface in the base of the L7/L12 stalk, and near the tRNA binding site of the peptidyltransferase center. The sequence is that of Large ribosomal subunit protein uL6 from Bradyrhizobium sp. (strain BTAi1 / ATCC BAA-1182).